The chain runs to 327 residues: Metaxin-1 homolog (327 aa).

The chain crosses the membrane as a helical span at residues 281-301 (IVAGVGAVLAMGAFAAWRGIY).

This sequence belongs to the metaxin family. In terms of assembly, associates with the mitochondrial contact site and cristae organizing system (MICOS) complex (also known as MINOS or MitOS complex).

Its subcellular location is the mitochondrion outer membrane. Involved in transport of proteins into the mitochondrion. Essential for embryonic development. This is Metaxin-1 homolog from Drosophila melanogaster (Fruit fly).